The following is a 259-amino-acid chain: Chymotrypsin-1 (259 aa).

The N-terminal stretch at 1–17 (MLRKVFAVVSVLLVVSA) is a signal peptide. The propeptide at 18–32 (AKVTKLVLDDNYVNR) is activation peptide. The Peptidase S1 domain maps to 33–255 (VVGGEVAKNG…YHDWVRTTMA (223 aa)). Cys59 and Cys75 are joined by a disulfide. Residues His74 and Asp119 each act as charge relay system in the active site. Cystine bridges form between Cys182-Cys198 and Cys208-Cys232. Ser212 functions as the Charge relay system in the catalytic mechanism.

It belongs to the peptidase S1 family. After blood feeding, expression is induced in the midgut epithelium, followed by secretion into the midgut lumen.

Its subcellular location is the secreted. It catalyses the reaction Preferential cleavage: Tyr-|-Xaa, Trp-|-Xaa, Phe-|-Xaa, Leu-|-Xaa.. This chain is Chymotrypsin-1 (CHYM1), found in Anopheles gambiae (African malaria mosquito).